Reading from the N-terminus, the 353-residue chain is Transcription factor MafA (353 aa).

A Phosphoserine modification is found at Ser-14. Lys-32 is covalently cross-linked (Glycyl lysine isopeptide (Lys-Gly) (interchain with G-Cter in SUMO2)). 2 disordered regions span residues 40–108 and 177–219; these read RFCH…GGTS and ADDM…GAGH. Positions 46–73 are enriched in low complexity; the sequence is PPGSLSSTPLSTPCSSVPSSPSFCAPSP. Phosphoserine is present on Ser-49. 2 positions are modified to phosphothreonine: Thr-53 and Thr-57. Phosphoserine is present on residues Ser-61 and Ser-65. Positions 74–93 are enriched in gly residues; sequence GTGGGGGAGGGGGSSQAGGA. Over residues 183–210 the composition is skewed to basic residues; it reads GHHHGAHHAAHHHHAAHHHHHHHHHHGG. A basic motif region spans residues 254–279; sequence RLKQKRRTLKNRGYAQSCRFKRVQQR. The bZIP domain occupies 254–317; it reads RLKQKRRTLK…DLYKEKYEKL (64 aa). The segment at 282–303 is leucine-zipper; sequence LESEKCQLQSQVEQLKLEVGRL. A disordered region spans residues 315–353; that stretch reads EKLAGRGGPGSAGGAGFPREPSPPQAGPGGAKGTADFFL. Positions 319–330 are enriched in gly residues; the sequence is GRGGPGSAGGAG.

Belongs to the bZIP family. Maf subfamily. As to quaternary structure, forms homodimers or heterodimers. Monomers and dimers are able to bind DNA, but the off-rate is faster for monomers. Interacts with NEUROD1 and PDX1. May interact with MAFB, FOS, JUN and PCAF. In terms of processing, ubiquitinated, leading to its degradation by the proteasome. Post-translationally, phosphorylated at tyrosines. As to expression, expressed in the islets of Langerhans (at protein level).

It is found in the nucleus. Functionally, transcription factor that activates insulin gene expression. Acts synergistically with NEUROD1/BETA2 and PDX1. Binds the insulin enhancer C1/RIPE3b element. Binds to consensus TRE-type MARE 5'-TGCTGACTCAGCA-3' DNA sequence. The sequence is that of Transcription factor MafA (MAFA) from Homo sapiens (Human).